Here is a 674-residue protein sequence, read N- to C-terminus: Membrane-anchored lipid-binding protein LAM5 (674 aa).

Disordered regions lie at residues 1–52 (MSDV…LNTE) and 65–151 (NQSA…GSPL). The Cytoplasmic segment spans residues 1-633 (MSDVDNWEPV…AEQQGLKVTM (633 aa)). Residues 69–81 (ADEHPTEIKHDQS) are compositionally biased toward basic and acidic residues. Low complexity predominate over residues 82–119 (RTSSTSSFFSGMISSFKSNVPSPVSRSTTPTSPVSQPS). Residue Thr110 is modified to Phosphothreonine. Residues Ser113 and Ser140 each carry the phosphoserine modification. Phosphothreonine is present on Thr143. At Ser149 the chain carries Phosphoserine. Residues 198 to 264 (KDFHETFKSV…FEDVTFMEKT (67 aa)) form the GRAM domain. Residues 336–357 (IDEENNDKDANDNDTNENDDEN) are compositionally biased toward acidic residues. Positions 336-380 (IDEENNDKDANDNDTNENDDENISTNETTPNSTSSSPDKEKEKAY) are disordered. The segment covering 358-371 (ISTNETTPNSTSSS) has biased composition (low complexity). The 174-residue stretch at 409–582 (NEFVLKELPF…ILSKFIKNNV (174 aa)) folds into the VASt domain. Residues 634–654 (ETWLFLYLIVVVLLLFNLFYI) form a helical membrane-spanning segment. Topologically, residues 655–674 (RSIAVSLHQLVKLQLVELKL) are lumenal.

The protein belongs to the YSP2 family.

It is found in the endoplasmic reticulum membrane. Functionally, may be involved in sterol transfer between intracellular membranes. The sequence is that of Membrane-anchored lipid-binding protein LAM5 from Saccharomyces cerevisiae (strain ATCC 204508 / S288c) (Baker's yeast).